Here is a 132-residue protein sequence, read N- to C-terminus: UPF0102 protein Achl_2213 (132 aa).

Belongs to the UPF0102 family.

This chain is UPF0102 protein Achl_2213, found in Pseudarthrobacter chlorophenolicus (strain ATCC 700700 / DSM 12829 / CIP 107037 / JCM 12360 / KCTC 9906 / NCIMB 13794 / A6) (Arthrobacter chlorophenolicus).